Reading from the N-terminus, the 496-residue chain is Beta-amylase (496 aa).

Substrate contacts are provided by Asp54, His94, and Asp102. Glu187 functions as the Proton donor in the catalytic mechanism. Residues Lys296, His301, and Thr343 each coordinate substrate. The active-site Proton acceptor is Glu381. Substrate contacts are provided by residues 382-383 (NA) and Arg421.

Belongs to the glycosyl hydrolase 14 family.

The catalysed reaction is Hydrolysis of (1-&gt;4)-alpha-D-glucosidic linkages in polysaccharides so as to remove successive maltose units from the non-reducing ends of the chains.. The polypeptide is Beta-amylase (BMY1) (Trifolium repens (Creeping white clover)).